The primary structure comprises 278 residues: Tryptophan synthase alpha chain (278 aa).

Catalysis depends on proton acceptor residues glutamate 50 and aspartate 61.

It belongs to the TrpA family. As to quaternary structure, tetramer of two alpha and two beta chains.

The catalysed reaction is (1S,2R)-1-C-(indol-3-yl)glycerol 3-phosphate + L-serine = D-glyceraldehyde 3-phosphate + L-tryptophan + H2O. Its pathway is amino-acid biosynthesis; L-tryptophan biosynthesis; L-tryptophan from chorismate: step 5/5. In terms of biological role, the alpha subunit is responsible for the aldol cleavage of indoleglycerol phosphate to indole and glyceraldehyde 3-phosphate. This is Tryptophan synthase alpha chain from Rhodopseudomonas palustris (strain ATCC BAA-98 / CGA009).